The following is a 445-amino-acid chain: Amino-acid acetyltransferase (445 aa).

In terms of domain architecture, N-acetyltransferase spans 299-445; it reads ERLRRASISD…RRSKILALDL (147 aa).

It belongs to the acetyltransferase family. ArgA subfamily.

The protein localises to the cytoplasm. The enzyme catalyses L-glutamate + acetyl-CoA = N-acetyl-L-glutamate + CoA + H(+). It functions in the pathway amino-acid biosynthesis; L-arginine biosynthesis; N(2)-acetyl-L-ornithine from L-glutamate: step 1/4. The polypeptide is Amino-acid acetyltransferase (argA) (Shewanella oneidensis (strain ATCC 700550 / JCM 31522 / CIP 106686 / LMG 19005 / NCIMB 14063 / MR-1)).